Here is a 679-residue protein sequence, read N- to C-terminus: Stress-70 protein, mitochondrial (679 aa).

A mitochondrion-targeting transit peptide spans 1 to 46 (MISASRAAAARLVGTTASRSPAAARHQDGWNGLSHEAFRFVSRRDY). Residues 1 to 432 (MISASRAAAA…IQGGVLAGDV (432 aa)) form an interaction with NFS1 region. Positions 63 and 64 each coordinate ADP. The nucleotide-binding domain (NBD) stretch occupies residues 63 to 431 (TNSCVAVMEG…AIQGGVLAGD (369 aa)). N6-acetyllysine is present on K76. T87 is subject to Phosphothreonine. An N6-acetyllysine; alternate mark is found at K135 and K138. K135 and K138 each carry N6-succinyllysine; alternate. K143 is subject to N6-acetyllysine. An N6-acetyllysine; alternate modification is found at K206. K206 carries the post-translational modification N6-succinyllysine; alternate. Position 206 is an N6-malonyllysine; alternate (K206). 2 positions are modified to N6-acetyllysine: K234 and K288. The residue at position 300 (K300) is an N6-acetyllysine; alternate. The residue at position 300 (K300) is an N6-succinyllysine; alternate. ADP is bound by residues E313, K316, and S320. K360 is subject to N6-acetyllysine; alternate. At K360 the chain carries N6-succinyllysine; alternate. K368 carries the N6-succinyllysine modification. 2 residues coordinate ADP: G388 and R391. K394 carries the N6-succinyllysine modification. Phosphoserine is present on S408. Positions 432 to 441 (VTDVLLLDVT) are interdomain linker. An interaction with FXN and ISCU region spans residues 432 to 679 (VTDVLLLDVT…QKEDQKEEKQ (248 aa)). The interval 442-679 (PLSLGIETLG…QKEDQKEEKQ (238 aa)) is substrate-binding domain (SBD). R513 carries the post-translational modification Omega-N-methylarginine. N6-acetyllysine; alternate occurs at positions 567 and 600. N6-succinyllysine; alternate occurs at positions 567 and 600. N6-succinyllysine is present on K610. K612 carries the post-translational modification N6-acetyllysine. At K646 the chain carries N6-acetyllysine; alternate. K646 bears the N6-succinyllysine; alternate mark. Positions 655–679 (MASEREGSGSSSTGEQKEDQKEEKQ) are disordered. A compositionally biased stretch (basic and acidic residues) spans 669–679 (EQKEDQKEEKQ).

Belongs to the heat shock protein 70 family. As to quaternary structure, interacts strongly with the intermediate form of FXN and weakly with its mature form. Interacts with HSCB. Associates with the mitochondrial contact site and cristae organizing system (MICOS) complex, composed of at least MICOS10/MIC10, CHCHD3/MIC19, CHCHD6/MIC25, APOOL/MIC27, IMMT/MIC60, APOO/MIC23/MIC26 and QIL1/MIC13. This complex was also known under the names MINOS or MitOS complex. The MICOS complex associates with mitochondrial outer membrane proteins SAMM50, MTX1, MTX2 and DNAJC11, mitochondrial inner membrane protein TMEM11 and with HSPA9. Interacts with DNLZ, the interaction is required to prevent self-aggregation. Interacts with TESPA1. Interacts with PDPN. Interacts with NFU1, NFS1 and ISCU. Interacts with TP53; the interaction promotes TP53 degradation. Interacts (via SBD domain) with UBXN2A; the interaction with UBXN2A inhibits HSPA9 interaction with and degradation of TP53, thereby promotes TP53 translocation to the nucleus. Interacts with ITPR1 AND VDAC1; this interaction couples ITPR1 to VDAC1. Component of the TIM23 mitochondrial inner membrane pre-sequence translocase complex.

The protein resides in the mitochondrion. Its subcellular location is the nucleus. The protein localises to the nucleolus. It localises to the cytoplasm. It is found in the mitochondrion matrix. It catalyses the reaction ATP + H2O = ADP + phosphate + H(+). With respect to regulation, the chaperone activity is regulated by ATP-induced allosteric coupling of the nucleotide-binding (NBD) and substrate-binding (SBD) domains. ATP binding in the nucleotide-binding pocket (NBP) leads to a conformational change in the NBD, which is transferred through the interdomain linker (IDL) to the substrate-binding domain (SBD). This elicits a reduced substrate affinity and a faster substrate exchange rate. Upon hydrolysis of ATP to ADP, the protein undergoes a conformational change that increases its affinity for substrate proteins. It cycles through repeated phases of ATP hydrolysis and nucleotide exchange, facilitating repeated cycles of substrate binding and release. Functions in collaboration with co-chaperones. Functions with the co-chaperone, DNLZ, to maintain solubility and regulate ATP hydrolysis. Nucleotide exchange factors, GRPEL1 and GRPEL2, accelerate nucleotide exchange. Its function is as follows. Mitochondrial chaperone that plays a key role in mitochondrial protein import, folding, and assembly. Plays an essential role in the protein quality control system, the correct folding of proteins, the re-folding of misfolded proteins, and the targeting of proteins for subsequent degradation. These processes are achieved through cycles of ATP binding, ATP hydrolysis, and ADP release, mediated by co-chaperones. In mitochondria, it associates with the TIM (translocase of the inner membrane) protein complex to assist in the import and folding of mitochondrial proteins. Plays an important role in mitochondrial iron-sulfur cluster (ISC) biogenesis, interacts with and stabilizes ISC cluster assembly proteins FXN, NFU1, NFS1 and ISCU. Regulates erythropoiesis via stabilization of ISC assembly. Regulates mitochondrial calcium-dependent apoptosis by coupling two calcium channels, ITPR1 and VDAC1, at the mitochondria-associated endoplasmic reticulum (ER) membrane to facilitate calcium transport from the ER lumen to the mitochondria intermembrane space, providing calcium for the downstream calcium channel MCU, which releases it into the mitochondrial matrix. Although primarily located in the mitochondria, it is also found in other cellular compartments. In the cytosol, it associates with proteins involved in signaling, apoptosis, or senescence. It may play a role in cell cycle regulation via its interaction with and promotion of degradation of TP53. May play a role in the control of cell proliferation and cellular aging. Protects against reactive oxygen species (ROS). Extracellular HSPA9 plays a cytoprotective role by preventing cell lysis following immune attack by the membrane attack complex by disrupting formation of the complex. This Rattus norvegicus (Rat) protein is Stress-70 protein, mitochondrial.